We begin with the raw amino-acid sequence, 475 residues long: Ribulose bisphosphate carboxylase large chain (475 aa).

A propeptide spanning residues 1 to 2 is cleaved from the precursor; sequence MS. P3 carries the N-acetylproline modification. N6,N6,N6-trimethyllysine is present on K14. Residues N123 and T173 each coordinate substrate. K175 serves as the catalytic Proton acceptor. Substrate is bound at residue K177. 3 residues coordinate Mg(2+): K201, D203, and E204. The residue at position 201 (K201) is an N6-carboxylysine. Residue H294 is the Proton acceptor of the active site. Residues R295, H327, and S379 each contribute to the substrate site.

Belongs to the RuBisCO large chain family. Type I subfamily. Heterohexadecamer of 8 large chains and 8 small chains. Requires Mg(2+) as cofactor.

It is found in the plastid. Its subcellular location is the chloroplast. It catalyses the reaction 2 (2R)-3-phosphoglycerate + 2 H(+) = D-ribulose 1,5-bisphosphate + CO2 + H2O. It carries out the reaction D-ribulose 1,5-bisphosphate + O2 = 2-phosphoglycolate + (2R)-3-phosphoglycerate + 2 H(+). Functionally, ruBisCO catalyzes two reactions: the carboxylation of D-ribulose 1,5-bisphosphate, the primary event in carbon dioxide fixation, as well as the oxidative fragmentation of the pentose substrate in the photorespiration process. Both reactions occur simultaneously and in competition at the same active site. This Chlorella vulgaris (Green alga) protein is Ribulose bisphosphate carboxylase large chain.